We begin with the raw amino-acid sequence, 207 residues long: Claudin-11 (207 aa).

M1 is a topological domain (cytoplasmic). A helical membrane pass occupies residues 2 to 22 (VATCLQVVGFVTSFVGWIGVI). Residues 23-82 (VTTSTNDWVVTCGYTIPTCRKLDELGSKGLWADCVMATGLYHCKPLVDILILPGYVQACR) are Extracellular-facing. The chain crosses the membrane as a helical span at residues 83–103 (ALMIAASVLGLPAILLLLTVL). Residues 104–122 (PCIRMGQEPGVAKYRRAQL) are Cytoplasmic-facing. A helical membrane pass occupies residues 123-143 (AGVLLILLALCALVATIWFPV). The Extracellular portion of the chain corresponds to 144 to 157 (CAHRETTIVSFGYS). Residues 158 to 178 (LYAGWIGAVLCLVGGCVILCC) form a helical membrane-spanning segment. Over 179–207 (AGDAQAFGENRFYYTAGSSSPTHAKSAHV) the chain is Cytoplasmic. Phosphoserine is present on residues S197 and S198.

This sequence belongs to the claudin family. Interacts with tetraspanin-3/TSPAN3. Interacts with OCLN.

The protein resides in the cell junction. Its subcellular location is the tight junction. The protein localises to the cell membrane. In terms of biological role, plays a major role in tight junction-specific obliteration of the intercellular space, through calcium-independent cell-adhesion activity. In Homo sapiens (Human), this protein is Claudin-11 (CLDN11).